The following is a 388-amino-acid chain: Phosphopentomutase (388 aa).

Aspartate 10, aspartate 282, histidine 287, aspartate 323, histidine 324, and histidine 335 together coordinate Mn(2+).

It belongs to the phosphopentomutase family. It depends on Mn(2+) as a cofactor.

Its subcellular location is the cytoplasm. The catalysed reaction is 2-deoxy-alpha-D-ribose 1-phosphate = 2-deoxy-D-ribose 5-phosphate. The enzyme catalyses alpha-D-ribose 1-phosphate = D-ribose 5-phosphate. It participates in carbohydrate degradation; 2-deoxy-D-ribose 1-phosphate degradation; D-glyceraldehyde 3-phosphate and acetaldehyde from 2-deoxy-alpha-D-ribose 1-phosphate: step 1/2. Its function is as follows. Isomerase that catalyzes the conversion of deoxy-ribose 1-phosphate (dRib-1-P) and ribose 1-phosphate (Rib-1-P) to deoxy-ribose 5-phosphate (dRib-5-P) and ribose 5-phosphate (Rib-5-P), respectively. This Acetivibrio thermocellus (strain ATCC 27405 / DSM 1237 / JCM 9322 / NBRC 103400 / NCIMB 10682 / NRRL B-4536 / VPI 7372) (Clostridium thermocellum) protein is Phosphopentomutase.